A 436-amino-acid polypeptide reads, in one-letter code: Homeobox protein PKNOX1 (436 aa).

The span at 1 to 20 (MMATQTLSIDSYQDGQQMQV) shows a compositional bias: polar residues. The interval 1–49 (MMATQTLSIDSYQDGQQMQVVTELKTEQDPNCSEPDAEGVSPPPVESQT) is disordered. Serine 33 and serine 41 each carry phosphoserine. One can recognise an MEIS N-terminal domain in the interval 80-163 (GSEGTTSASF…MNSETLLSGE (84 aa)). The segment at residues 259-321 (SKNKRGVLPK…NARRRILQPM (63 aa)) is a DNA-binding region (homeobox; TALE-type). The segment at 401–436 (AGQSEDESVDSTEEDAGALAPAHISGLVLENSDSLQ) is disordered. The segment covering 404–416 (SEDESVDSTEEDA) has biased composition (acidic residues).

It belongs to the TALE/MEIS homeobox family. Interacts with MN1. In terms of tissue distribution, ubiquitous. Isoform 2 is expressed in all examined tissues except in bone marrow.

It is found in the nucleus. Its function is as follows. Activates transcription in the presence of PBX1A and HOXA1. The sequence is that of Homeobox protein PKNOX1 from Homo sapiens (Human).